Here is a 379-residue protein sequence, read N- to C-terminus: Carbamoyl phosphate synthase small chain (379 aa).

The tract at residues 1–189 (MSKSALLVLE…GLPEAKDDSE (189 aa)) is CPSase. S47, G241, and G243 together coordinate L-glutamine. A Glutamine amidotransferase type-1 domain is found at 193 to 379 (HVVAYDFGAK…FIELIKQHSA (187 aa)). The active-site Nucleophile is the C269. The L-glutamine site is built by L270, Q273, N311, G313, and F314. Catalysis depends on residues H353 and E355.

It belongs to the CarA family. Composed of two chains; the small (or glutamine) chain promotes the hydrolysis of glutamine to ammonia, which is used by the large (or ammonia) chain to synthesize carbamoyl phosphate. Tetramer of heterodimers (alpha,beta)4.

It catalyses the reaction hydrogencarbonate + L-glutamine + 2 ATP + H2O = carbamoyl phosphate + L-glutamate + 2 ADP + phosphate + 2 H(+). It carries out the reaction L-glutamine + H2O = L-glutamate + NH4(+). The protein operates within amino-acid biosynthesis; L-arginine biosynthesis; carbamoyl phosphate from bicarbonate: step 1/1. Its pathway is pyrimidine metabolism; UMP biosynthesis via de novo pathway; (S)-dihydroorotate from bicarbonate: step 1/3. Functionally, small subunit of the glutamine-dependent carbamoyl phosphate synthetase (CPSase). CPSase catalyzes the formation of carbamoyl phosphate from the ammonia moiety of glutamine, carbonate, and phosphate donated by ATP, constituting the first step of 2 biosynthetic pathways, one leading to arginine and/or urea and the other to pyrimidine nucleotides. The small subunit (glutamine amidotransferase) binds and cleaves glutamine to supply the large subunit with the substrate ammonia. The chain is Carbamoyl phosphate synthase small chain from Vibrio vulnificus (strain YJ016).